The following is a 358-amino-acid chain: MTALKNDRFLRALLREPVDTTPVWMMRQAGRYLPEYRETRAQAGDFLSLCKNTEFACEVTLQPLRRYDLDAAILFSDILTIPDALGLGLYFETGEGPKFKKTIRTEQDVLNLPNFNAKSDLDYVMNAVTTIHSALGGQVPLIGFSGSPWTLATYMVEGGSSKDFRYTKHMMYSQPEVLHALLDRLAVAVIDYLNAQIDAGAQAVQIFDSWGGALAHREYTEFSLNYMRKIVAGLQREKDGRRIPVILFTKGGGQWLEPMIATGADAIGLDWTTPLNVARKTVAGRVALQGNLDPAVLYGSAASIEKSVKAMLDDAYANGETTGYIANLGHGITQWVDPSQPKIFVDTVHEYSAKYLGS.

Residues 27-31 (RQAGR), aspartate 77, tyrosine 154, serine 209, and histidine 330 each bind substrate.

This sequence belongs to the uroporphyrinogen decarboxylase family. Homodimer.

Its subcellular location is the cytoplasm. The enzyme catalyses uroporphyrinogen III + 4 H(+) = coproporphyrinogen III + 4 CO2. It participates in porphyrin-containing compound metabolism; protoporphyrin-IX biosynthesis; coproporphyrinogen-III from 5-aminolevulinate: step 4/4. Its function is as follows. Catalyzes the decarboxylation of four acetate groups of uroporphyrinogen-III to yield coproporphyrinogen-III. The protein is Uroporphyrinogen decarboxylase of Acinetobacter baylyi (strain ATCC 33305 / BD413 / ADP1).